We begin with the raw amino-acid sequence, 398 residues long: MRGEFYQQLTNDLETARAEGLFKEERIITSAQQADITVADGSHVINFCANNYLGLANHPDLIAAAKAGMDSHGFGMASVRFICGTQDSHKELEQKLAAFLGMEDAILYSSCFDANGGLFETLLGAEDAIISDALNHASIIDGVRLCKAKRYRYANNDMQELEARLKEAREAGARHVLIATDGVFSMDGVIANLKGVCDLADKYDALVMVDDSHAVGFVGENGRGSHEYCDVMGRVDIITGTLGKALGGASGGYTAARKEVVEWLRQRSRPYLFSNSLAPAIVAASIKVLEMVEAGSELRDRLWANARQFREQMSAAGFTLAGADHAIIPVMLGDAVVAQKFARELQKEGIYVTGFFYPVVPKGQARIRTQMSAAHTPEQITRAVEAFTRIGKQLGVIA.

111-112 (CF) serves as a coordination point for pyridoxal 5'-phosphate. Substrate is bound at residue His136. Residues Ser185, 210 to 213 (DDSH), 241 to 244 (TLGK), and 274 to 275 (SN) contribute to the pyridoxal 5'-phosphate site. Lys244 carries the N6-(pyridoxal phosphate)lysine modification. Arg368 provides a ligand contact to substrate.

Belongs to the class-II pyridoxal-phosphate-dependent aminotransferase family. Homodimer. Requires pyridoxal 5'-phosphate as cofactor.

The enzyme catalyses glycine + acetyl-CoA = (2S)-2-amino-3-oxobutanoate + CoA. It participates in amino-acid degradation; L-threonine degradation via oxydo-reductase pathway; glycine from L-threonine: step 2/2. Its function is as follows. Catalyzes the cleavage of 2-amino-3-ketobutyrate to glycine and acetyl-CoA. This Escherichia coli (strain K12) protein is 2-amino-3-ketobutyrate coenzyme A ligase.